Reading from the N-terminus, the 199-residue chain is dTTP/UTP pyrophosphatase (199 aa).

Asp78 functions as the Proton acceptor in the catalytic mechanism.

Belongs to the Maf family. YhdE subfamily. It depends on a divalent metal cation as a cofactor.

The protein resides in the cytoplasm. It carries out the reaction dTTP + H2O = dTMP + diphosphate + H(+). It catalyses the reaction UTP + H2O = UMP + diphosphate + H(+). Nucleoside triphosphate pyrophosphatase that hydrolyzes dTTP and UTP. May have a dual role in cell division arrest and in preventing the incorporation of modified nucleotides into cellular nucleic acids. The polypeptide is dTTP/UTP pyrophosphatase (Clostridium acetobutylicum (strain ATCC 824 / DSM 792 / JCM 1419 / IAM 19013 / LMG 5710 / NBRC 13948 / NRRL B-527 / VKM B-1787 / 2291 / W)).